Consider the following 146-residue polypeptide: UPF0178 protein BCE33L2782 (146 aa).

Belongs to the UPF0178 family.

The polypeptide is UPF0178 protein BCE33L2782 (Bacillus cereus (strain ZK / E33L)).